A 181-amino-acid polypeptide reads, in one-letter code: Probable chemoreceptor glutamine deamidase CheD (181 aa).

The protein belongs to the CheD family.

The catalysed reaction is L-glutaminyl-[protein] + H2O = L-glutamyl-[protein] + NH4(+). Probably deamidates glutamine residues to glutamate on methyl-accepting chemotaxis receptors (MCPs), playing an important role in chemotaxis. The sequence is that of Probable chemoreceptor glutamine deamidase CheD from Agrobacterium fabrum (strain C58 / ATCC 33970) (Agrobacterium tumefaciens (strain C58)).